A 176-amino-acid chain; its full sequence is Lipoprotein signal peptidase (176 aa).

3 helical membrane passes run 12–32 (WYWV…WVLT), 67–87 (WQKW…TIWL), and 94–114 (VWRL…NLID). Residues Asp123 and Asp141 contribute to the active site. Residues 133–153 (HFAAFNIADSAICIGAGLIIL) traverse the membrane as a helical segment.

Belongs to the peptidase A8 family.

The protein resides in the cell inner membrane. It catalyses the reaction Release of signal peptides from bacterial membrane prolipoproteins. Hydrolyzes -Xaa-Yaa-Zaa-|-(S,diacylglyceryl)Cys-, in which Xaa is hydrophobic (preferably Leu), and Yaa (Ala or Ser) and Zaa (Gly or Ala) have small, neutral side chains.. It participates in protein modification; lipoprotein biosynthesis (signal peptide cleavage). Functionally, this protein specifically catalyzes the removal of signal peptides from prolipoproteins. The sequence is that of Lipoprotein signal peptidase from Shewanella sediminis (strain HAW-EB3).